Consider the following 402-residue polypeptide: Indole-3-glycerol phosphate synthase, chloroplastic (402 aa).

A chloroplast-targeting transit peptide spans 1–65; sequence MEGLVPVQRL…SDLKESLAVS (65 aa).

This sequence belongs to the TrpC family. In terms of tissue distribution, expressed in leaves.

The protein resides in the plastid. It is found in the chloroplast. The catalysed reaction is 1-(2-carboxyphenylamino)-1-deoxy-D-ribulose 5-phosphate + H(+) = (1S,2R)-1-C-(indol-3-yl)glycerol 3-phosphate + CO2 + H2O. It participates in amino-acid biosynthesis; L-tryptophan biosynthesis; L-tryptophan from chorismate: step 4/5. Indole-3-glycerol phosphate synthase required for tryptophan biosynthesis. This Arabidopsis thaliana (Mouse-ear cress) protein is Indole-3-glycerol phosphate synthase, chloroplastic.